Here is a 669-residue protein sequence, read N- to C-terminus: JmjC domain-containing histone demethylation protein 1 (669 aa).

Residues 1–61 are disordered; it reads MTAVAASSRV…RRKKPRTELV (61 aa). Composition is skewed to polar residues over residues 16-27 and 36-49; these read ASSSAHPRTLRS and HDSS…QSKQ. The PHD-type zinc-finger motif lies at 65–126; that stretch reads ELDCAACPAV…KWYCQPCITR (62 aa). Disordered regions lie at residues 131 to 150 and 220 to 256; these read FESG…RPPR and PPDR…QATH. Residues 246-255 are compositionally biased toward basic residues; that stretch reads KPARAKKQAT. A JmjC domain is found at 332–494; sequence VTGTPMQAYV…TQWKLVEIEE (163 aa). Positions 390 and 392 each coordinate Fe cation. Lysine 407 is a binding site for substrate. Histidine 462 serves as a coordination point for Fe cation.

It belongs to the JHDM1 histone demethylase family. Requires Fe(2+) as cofactor.

Its subcellular location is the nucleus. It carries out the reaction N(6),N(6)-dimethyl-L-lysyl(36)-[histone H3] + 2 2-oxoglutarate + 2 O2 = L-lysyl(36)-[histone H3] + 2 formaldehyde + 2 succinate + 2 CO2. In terms of biological role, histone demethylase that specifically demethylates 'Lys-36' of histone H3, thereby playing a central role in histone code. This chain is JmjC domain-containing histone demethylation protein 1 (JHD1), found in Mycosarcoma maydis (Corn smut fungus).